Consider the following 108-residue polypeptide: Evasin P1127 (108 aa).

A signal peptide spans methionine 1–alanine 28. 3 disulfides stabilise this stretch: cysteine 41/cysteine 63, cysteine 45/cysteine 65, and cysteine 56/cysteine 76. An N-linked (GlcNAc...) asparagine glycan is attached at asparagine 44. Residue asparagine 89 is glycosylated (N-linked (GlcNAc...) asparagine).

Its subcellular location is the secreted. Its function is as follows. Salivary chemokine-binding protein which binds to host chemokines CXCL1, CXCL2, CXCL3, CXCL5 and CXCL8. The polypeptide is Evasin P1127 (Ixodes ricinus (Common tick)).